The primary structure comprises 197 residues: dTTP/UTP pyrophosphatase (197 aa).

D70 acts as the Proton acceptor in catalysis.

The protein belongs to the Maf family. YhdE subfamily. A divalent metal cation is required as a cofactor.

It localises to the cytoplasm. The catalysed reaction is dTTP + H2O = dTMP + diphosphate + H(+). The enzyme catalyses UTP + H2O = UMP + diphosphate + H(+). Its function is as follows. Nucleoside triphosphate pyrophosphatase that hydrolyzes dTTP and UTP. May have a dual role in cell division arrest and in preventing the incorporation of modified nucleotides into cellular nucleic acids. This Methanosarcina mazei (strain ATCC BAA-159 / DSM 3647 / Goe1 / Go1 / JCM 11833 / OCM 88) (Methanosarcina frisia) protein is dTTP/UTP pyrophosphatase.